Consider the following 98-residue polypeptide: Small ribosomal subunit protein bS6 (98 aa).

The protein belongs to the bacterial ribosomal protein bS6 family.

Binds together with bS18 to 16S ribosomal RNA. The chain is Small ribosomal subunit protein bS6 from Staphylococcus aureus (strain NCTC 8325 / PS 47).